Here is a 213-residue protein sequence, read N- to C-terminus: StAR-related lipid transfer protein 5 (213 aa).

Residues 1-213 enclose the START domain; that stretch reads MDPALAAQMS…LQKAVKQFHE (213 aa).

May be involved in the intracellular transport of sterols or other lipids. May bind cholesterol or other sterols. The polypeptide is StAR-related lipid transfer protein 5 (STARD5) (Homo sapiens (Human)).